Here is a 139-residue protein sequence, read N- to C-terminus: Putative pre-16S rRNA nuclease (139 aa).

The protein belongs to the YqgF nuclease family.

It localises to the cytoplasm. Its function is as follows. Could be a nuclease involved in processing of the 5'-end of pre-16S rRNA. The protein is Putative pre-16S rRNA nuclease of Streptococcus thermophilus (strain CNRZ 1066).